Reading from the N-terminus, the 311-residue chain is Ribonuclease HIII (311 aa).

One can recognise an RNase H type-2 domain in the interval 95–311; it reads MSIVGSDEVG…NTEKAFRLLK (217 aa). Residues Asp101, Glu102, and Asp206 each contribute to the a divalent metal cation site.

It belongs to the RNase HII family. RnhC subfamily. Mn(2+) serves as cofactor. The cofactor is Mg(2+).

It localises to the cytoplasm. It carries out the reaction Endonucleolytic cleavage to 5'-phosphomonoester.. Its function is as follows. Endonuclease that specifically degrades the RNA of RNA-DNA hybrids. The polypeptide is Ribonuclease HIII (Bacillus thuringiensis subsp. konkukian (strain 97-27)).